The primary structure comprises 65 residues: Conotoxin TsMRCL-04 (65 aa).

The signal sequence occupies residues 1 to 20 (MRCLPVFIILLLLIPSAASA). Positions 21-48 (AQPETKDDAALASFYDNAKRTLQRHWAK) are excised as a propeptide. E63 bears the Glutamic acid 1-amide mark.

This sequence belongs to the conotoxin T superfamily. Post-translationally, contains 2 disulfide bonds that can be either 'C1-C3, C2-C4' or 'C1-C4, C2-C3', since these disulfide connectivities have been observed for conotoxins with cysteine framework V (for examples, see AC P0DQQ7 and AC P81755). In terms of tissue distribution, expressed by the venom duct.

It is found in the secreted. The protein is Conotoxin TsMRCL-04 of Conus tessulatus (Tessellate cone).